The following is a 126-amino-acid chain: Large-conductance mechanosensitive channel (126 aa).

3 helical membrane-spanning segments follow: residues 14 to 34, 40 to 60, and 67 to 87; these read VIDL…VTSL, MPLL…FTFV, and GLFI…FLFI.

The protein belongs to the MscL family. In terms of assembly, homopentamer.

The protein resides in the cell membrane. In terms of biological role, channel that opens in response to stretch forces in the membrane lipid bilayer. May participate in the regulation of osmotic pressure changes within the cell. This is Large-conductance mechanosensitive channel from Bacillus licheniformis (strain ATCC 14580 / DSM 13 / JCM 2505 / CCUG 7422 / NBRC 12200 / NCIMB 9375 / NCTC 10341 / NRRL NRS-1264 / Gibson 46).